We begin with the raw amino-acid sequence, 49 residues long: MRKKITLACKTCGNRNYTTMKSSASAAERLEVKKYCSTCNSHTAHLETK.

Belongs to the bacterial ribosomal protein bL33 family.

Its function is as follows. Plays a role in sporulation at high temperatures. This is Large ribosomal subunit protein bL33B (rpmGB) from Bacillus subtilis (strain 168).